The sequence spans 142 residues: Glycine-rich RNA-binding protein 1 (142 aa).

The RRM domain maps to 1–65; that stretch reads NSLHSAFSTY…RNITVNEAQS (65 aa). A disordered region spans residues 48-101; that stretch reads MNGKELDGRNITVNEAQSRGGRGGGGGGGYGGGRGGGGGYGRRDGGGGGYGGGG. Residues 67–101 are compositionally biased toward gly residues; sequence GGRGGGGGGGYGGGRGGGGGYGRRDGGGGGYGGGG.

In terms of biological role, possibly has a role in RNA transcription or processing during stress. This Sorghum bicolor (Sorghum) protein is Glycine-rich RNA-binding protein 1 (GRP1).